Consider the following 620-residue polypeptide: Probably inactive leucine-rich repeat receptor-like protein kinase At5g48380 (620 aa).

The N-terminal stretch at 1–27 is a signal peptide; sequence MMMGRLVFVIWLYNCLCLLLLSSLVDA. At 28-228 the chain is on the extracellular side; sequence DQANIDCLRT…SASSSRGKVV (201 aa). N-linked (GlcNAc...) asparagine glycans are attached at residues Asn-56, Asn-111, Asn-119, and Asn-147. LRR repeat units follow at residues 101–124, 126–148, 150–172, and 174–196; these read DLTGLDLSRNNFSGPLPANISTLI, LVTILDLSYNSFSGEIPMLISNI, FLNTLMLQHNQFTGTLPPQLAQL, and RLKTFSVSDNRLVGPIPNFNQTL. A glycan (N-linked (GlcNAc...) asparagine) is linked at Asn-193. Residues 229-249 traverse the membrane as a helical segment; that stretch reads IIAAVGGLTAAALVVGVVLFF. The Cytoplasmic segment spans residues 250-620; the sequence is YFRKLGAVRK…DFIEELIVAR (371 aa). A Phosphothreonine modification is found at Thr-300. A Protein kinase domain is found at 303–596; sequence FKKDNIIATG…RAIGESYNFT (294 aa). ATP-binding positions include 309-317 and Lys-331; that span reads IATGRTGTM. Thr-463 carries the post-translational modification Phosphothreonine. Phosphotyrosine is present on Tyr-479. Residue Thr-482 is modified to Phosphothreonine.

This sequence belongs to the protein kinase superfamily. Ser/Thr protein kinase family.

It is found in the cell membrane. This chain is Probably inactive leucine-rich repeat receptor-like protein kinase At5g48380, found in Arabidopsis thaliana (Mouse-ear cress).